The sequence spans 361 residues: Peptide chain release factor 1 (361 aa).

Glutamine 235 is subject to N5-methylglutamine. The disordered stretch occupies residues 288-307; that stretch reads AARSADRKDQVGSGDRSERI.

Belongs to the prokaryotic/mitochondrial release factor family. Methylated by PrmC. Methylation increases the termination efficiency of RF1.

It is found in the cytoplasm. In terms of biological role, peptide chain release factor 1 directs the termination of translation in response to the peptide chain termination codons UAG and UAA. The sequence is that of Peptide chain release factor 1 from Nitrobacter hamburgensis (strain DSM 10229 / NCIMB 13809 / X14).